The following is a 333-amino-acid chain: MAFADRLLAAWYAGHPALALLRPLEALYRRVVTRKRARFLSGESASYRAPVPVIVVGNITVGGTGKTPMILWLIEHCRQLGLKVGVVSRGYGAKPPQLPWRVQANQCADQAGDEPLLIVQRTGVPLMIDPDRSRAVQALLASEPLDLILCDDGMQHYRLARDLELVLIDAARGLGNGRCLPAGPLREPAERLLDADAVLFNGANADRADGFGFCLQPSALVNLRSGERRALDHFPAGQRLHAVAGIGNPQRFFNTLLGLNWQPVPHPFADHAQFSAQSLAFSPQLPLVMTEKDAVKCRAFAADDWWYLAVEAQPTPAFSAWFDNQLQRLLRKP.

60–67 (TVGGTGKT) is an ATP binding site.

The protein belongs to the LpxK family.

The enzyme catalyses a lipid A disaccharide + ATP = a lipid IVA + ADP + H(+). It participates in glycolipid biosynthesis; lipid IV(A) biosynthesis; lipid IV(A) from (3R)-3-hydroxytetradecanoyl-[acyl-carrier-protein] and UDP-N-acetyl-alpha-D-glucosamine: step 6/6. In terms of biological role, transfers the gamma-phosphate of ATP to the 4'-position of a tetraacyldisaccharide 1-phosphate intermediate (termed DS-1-P) to form tetraacyldisaccharide 1,4'-bis-phosphate (lipid IVA). This chain is Tetraacyldisaccharide 4'-kinase, found in Pseudomonas putida (strain GB-1).